The chain runs to 147 residues: Prefoldin subunit alpha (147 aa).

This sequence belongs to the prefoldin alpha subunit family. Heterohexamer of two alpha and four beta subunits.

The protein localises to the cytoplasm. Functionally, molecular chaperone capable of stabilizing a range of proteins. Seems to fulfill an ATP-independent, HSP70-like function in archaeal de novo protein folding. The chain is Prefoldin subunit alpha from Saccharolobus islandicus (strain Y.N.15.51 / Yellowstone #2) (Sulfolobus islandicus).